The chain runs to 969 residues: MSAGPGWEPCTKRPRWGAAGTSAPTASDSRSFPGRQRRVLDPKDAPVQFRVPPSSPACVSGRAGPHRGNATSFVFKQKTITTWMDTKGPKTAESESKENNNTRIDSMMSSVQKDNFYPHKVEKLENVPQLNLDKSPTEKSSQYLNQQQTASVCKWQNEGKHAEQLLASEPPAGTPLPKQLSNANIGQSPHTDDHSDTDHEEDRDNQQFLTPIKLANTKPTVGDGQARSNCKCSGSRQSVKDCTGCQQEEVDVLPESPLSDVGAEDIGTGPKNDNKLTGQESSLGDSPPFEKESEPESPMDVDNSKNSCQDSEADEETSPVFDEQDDRSSQTANKLSSCQAREADGDLRKRYLTKGSEVRLHFQFEGENNAGTSDLNAKPSGNSSSLNVECRSSKQHGKRDSKITDHFMRISKSEDRRKEQCEVRHQRTERKIPKYIPPNLPPEKKWLGTPIEEMRKMPRCGIHLPSLRPSASHTVTVRVDLLRAGEVPKPFPTHYKDLWDNKHVKMPCSEQNLYPVEDENGERTAGSRWELIQTALLNKFTRPQNLKDAILKYNVAYSKKWDFTALVDFWDKVLEEAEAQHLYQSILPDMVKIALCLPNICTQPIPLLKQKMNHSVTMSQEQIASLLANAFFCTFPRRNAKMKSEYSSYPDINFNRLFEGRSSRKPEKLKTLFCYFRRVTEKKPTGLVTFTRQSLEDFPEWERCEKPLTRLHVTYEGTIEGNGRGMLQVDFANRFVGGGVTGAGLVQEEIRFLINPELIVSRLFTEVLDHNECLIITGTEQYSEYTGYAETYRWARSHEDGSEKDDWQRRCTEIVAIDALHFRRYLDQFVPEKVRRELNKAYCGFLRPGVPSENLSAVATGNWGCGAFGGDARLKALIQILAAAAAERDVVYFTFGDSELMRDIYSMHTFLTERKLDVGKVYKLLLRYYNEECRNCSTPGPDIKLYPFIYHAVESSAETTDMPGQKAGT.

3 disordered regions span residues 1 to 149 (MSAG…QQQT), 161 to 341 (HAEQ…CQAR), and 368 to 400 (NNAG…GKRD). The tract at residues 1–449 (MSAGPGWEPC…LPPEKKWLGT (449 aa)) is A-domain. The Nuclear localization signal signature appears at 10-16 (CTKRPRW). A compositionally biased stretch (polar residues) spans 69-84 (NATSFVFKQKTITTWM). Positions 77-84 (QKTITTWM) match the PIP-box (PCNA interacting peptide) motif. A compositionally biased stretch (basic and acidic residues) spans 87 to 100 (KGPKTAESESKENN). The segment covering 101–113 (NTRIDSMMSSVQK) has biased composition (polar residues). Positions 116–125 (FYPHKVEKLE) are enriched in basic and acidic residues. 2 stretches are compositionally biased toward polar residues: residues 128 to 149 (PQLN…QQQT) and 179 to 189 (QLSNANIGQSP). Serine 135 carries the post-translational modification Phosphoserine. The residue at position 137 (threonine 137) is a Phosphothreonine. Over residues 190-205 (HTDDHSDTDHEEDRDN) the composition is skewed to basic and acidic residues. A Phosphoserine modification is found at serine 195. A Phosphothreonine modification is found at threonine 197. Residues 226–237 (ARSNCKCSGSRQ) show a composition bias toward polar residues. Phosphoserine is present on residues serine 256, serine 259, serine 281, serine 286, serine 293, serine 297, and serine 311. Positions 275–284 (KLTGQESSLG) are enriched in polar residues. The span at 311–325 (SEADEETSPVFDEQD) shows a compositional bias: acidic residues. Polar residues-rich tracts occupy residues 329–339 (SQTANKLSSCQ) and 369–387 (NAGT…SSLN). Lysine 334 is subject to N6-acetyllysine. Residues 603-788 (QPIPLLKQKM…TEQYSEYTGY (186 aa)) are catalytic. Position 719-720 (719-720 (IE)) interacts with substrate. Aspartate 730 is an active-site residue. Substrate-binding residues include asparagine 733 and glutamine 747. Residues glutamate 748 and glutamate 749 contribute to the active site. Substrate contacts are provided by residues tyrosine 788 and 862-867 (NWGCGA).

The protein belongs to the poly(ADP-ribose) glycohydrolase family. Interacts with PCNA. Interacts with NUDT5.

It localises to the nucleus. The catalysed reaction is [(1''-&gt;2')-ADP-alpha-D-ribose](n) + H2O = [(1''-&gt;2')-ADP-alpha-D-ribose](n-1) + ADP-D-ribose. In terms of biological role, poly(ADP-ribose) glycohydrolase that degrades poly(ADP-ribose) by hydrolyzing the ribose-ribose bonds present in poly(ADP-ribose). PARG acts both as an endo- and exoglycosidase, releasing poly(ADP-ribose) of different length as well as ADP-ribose monomers. It is however unable to cleave the ester bond between the terminal ADP-ribose and ADP-ribosylated residues, leaving proteins that are mono-ADP-ribosylated. Poly(ADP-ribose) is synthesized after DNA damage is only present transiently and is rapidly degraded by PARG. Required to prevent detrimental accumulation of poly(ADP-ribose) upon prolonged replicative stress, while it is not required for recovery from transient replicative stress. Responsible for the prevalence of mono-ADP-ribosylated proteins in cells, thanks to its ability to degrade poly(ADP-ribose) without cleaving the terminal protein-ribose bond. Required for retinoid acid-dependent gene transactivation, probably by removing poly(ADP-ribose) from histone demethylase KDM4D, allowing chromatin derepression at RAR-dependent gene promoters. Involved in the synthesis of ATP in the nucleus, together with PARP1, NMNAT1 and NUDT5. Nuclear ATP generation is required for extensive chromatin remodeling events that are energy-consuming. The sequence is that of Poly(ADP-ribose) glycohydrolase from Mus musculus (Mouse).